Consider the following 424-residue polypeptide: Adenylyltransferase and sulfurtransferase UBA4 (424 aa).

ATP contacts are provided by residues G76, D97, 104 to 108 (TNLHR), K121, and 165 to 166 (DS). Residues C206 and C209 each contribute to the Zn(2+) site. C223 (glycyl thioester intermediate; for adenylyltransferase activity) is an active-site residue. C283 lines the Zn(2+) pocket. The Rhodanese domain occupies 326–422 (RNSDHVLLDV…WYSEVDQNIP (97 aa)). The active-site Cysteine persulfide intermediate; for sulfurtransferase activity is the C382.

It in the N-terminal section; belongs to the HesA/MoeB/ThiF family. UBA4 subfamily. The cofactor is Zn(2+).

The protein resides in the cytoplasm. Its subcellular location is the cytosol. It participates in tRNA modification; 5-methoxycarbonylmethyl-2-thiouridine-tRNA biosynthesis. Plays a central role in 2-thiolation of mcm(5)S(2)U at tRNA wobble positions of cytosolic tRNA(Lys), tRNA(Glu) and tRNA(Gln). Acts by mediating the C-terminal thiocarboxylation of sulfur carrier URM1. Its N-terminus first activates URM1 as acyl-adenylate (-COAMP), then the persulfide sulfur on the catalytic cysteine is transferred to URM1 to form thiocarboxylation (-COSH) of its C-terminus. The reaction probably involves hydrogen sulfide that is generated from the persulfide intermediate and that acts as a nucleophile towards URM1. Subsequently, a transient disulfide bond is formed. Does not use thiosulfate as sulfur donor; NFS1 probably acting as a sulfur donor for thiocarboxylation reactions. Prior mcm(5) tRNA modification by the elongator complex is required for 2-thiolation. May also be involved in protein urmylation. The sequence is that of Adenylyltransferase and sulfurtransferase UBA4 from Meyerozyma guilliermondii (strain ATCC 6260 / CBS 566 / DSM 6381 / JCM 1539 / NBRC 10279 / NRRL Y-324) (Yeast).